Reading from the N-terminus, the 283-residue chain is Large ribosomal subunit protein uL2 (283 aa).

Disordered regions lie at residues 1-59 (MSIK…GGHK) and 222-283 (RGVA…TGGQ).

Belongs to the universal ribosomal protein uL2 family. Part of the 50S ribosomal subunit. Forms a bridge to the 30S subunit in the 70S ribosome.

One of the primary rRNA binding proteins. Required for association of the 30S and 50S subunits to form the 70S ribosome, for tRNA binding and peptide bond formation. It has been suggested to have peptidyltransferase activity; this is somewhat controversial. Makes several contacts with the 16S rRNA in the 70S ribosome. The chain is Large ribosomal subunit protein uL2 from Salinibacter ruber (strain DSM 13855 / M31).